The sequence spans 400 residues: uncharacterized protein (400 aa).

This sequence to M.jannaschii MJ1544 and MJ1637.

This is an uncharacterized protein from Haemophilus influenzae (strain ATCC 51907 / DSM 11121 / KW20 / Rd).